The chain runs to 673 residues: Methionine--tRNA ligase (673 aa).

The short motif at Tyr-14–Asn-24 is the 'HIGH' region element. The short motif at Lys-310 to Ser-314 is the 'KMSKS' region element. Lys-313 contacts ATP. Residues Val-571 to Ser-673 enclose the tRNA-binding domain.

Belongs to the class-I aminoacyl-tRNA synthetase family. MetG type 2B subfamily. In terms of assembly, homodimer.

The protein resides in the cytoplasm. The catalysed reaction is tRNA(Met) + L-methionine + ATP = L-methionyl-tRNA(Met) + AMP + diphosphate. Is required not only for elongation of protein synthesis but also for the initiation of all mRNA translation through initiator tRNA(fMet) aminoacylation. In Oceanobacillus iheyensis (strain DSM 14371 / CIP 107618 / JCM 11309 / KCTC 3954 / HTE831), this protein is Methionine--tRNA ligase (metG).